Reading from the N-terminus, the 34-residue chain is MSDIN-like toxin proprotein 2 (34 aa).

Residues 1 to 10 (MSDINTARLP) constitute a propeptide that is removed on maturation. The cyclopeptide (Phe-Pro) cross-link spans 11–20 (FYQFPDFKYP). Residues 21–34 (CVGDDIEMVLARGE) constitute a propeptide that is removed on maturation.

It belongs to the MSDIN fungal toxin family. Processed by the macrocyclase-peptidase enzyme POPB to yield a toxic cyclic decapeptide. POPB first removes 10 residues from the N-terminus. Conformational trapping of the remaining peptide forces the enzyme to release this intermediate rather than proceed to macrocyclization. The enzyme rebinds the remaining peptide in a different conformation and catalyzes macrocyclization of the N-terminal 10 residues.

Functionally, probable toxin that belongs to the MSDIN-like toxin family responsible for a large number of food poisoning cases and deaths. This Amanita bisporigera (Destroying angel) protein is MSDIN-like toxin proprotein 2.